The chain runs to 394 residues: ATP-dependent RNA helicase fal1 (394 aa).

The short motif at 21–49 (SSFEEMNLKEDLLRGIYAYGYETPSAVQS) is the Q motif element. The Helicase ATP-binding domain occupies 52–222 (IIQICKGRDV…NKFTTNPVRI (171 aa)). 65 to 72 (AQSGTGKT) serves as a coordination point for ATP. Position 67 is a phosphoserine (Ser67). The short motif at 170 to 173 (DEAD) is the DEAD box element. Residues 233 to 394 (GLKQYFIAVE…EMPMNIGDMV (162 aa)) form the Helicase C-terminal domain.

It belongs to the DEAD box helicase family. DDX48/FAL1 subfamily.

The protein localises to the nucleus. The protein resides in the nucleolus. The catalysed reaction is ATP + H2O = ADP + phosphate + H(+). In terms of biological role, ATP-dependent RNA helicase involved in 40S ribosomal subunit biogenesis. Required for the processing and cleavage of 35S pre-rRNA at sites A0, A1, and A2, leading to mature 18S rRNA. This is ATP-dependent RNA helicase fal1 (tif412) from Schizosaccharomyces pombe (strain 972 / ATCC 24843) (Fission yeast).